Reading from the N-terminus, the 240-residue chain is MGSKQPYLNGAYYGPSIPPPPKAHRSYNSPGFGCCCFSCLGSCLRCCGCCILSLICNILIAVAVILGVAALILWLIFRPNAVKFYVADANLNRFSFDPNNNLHYSLDLNFTIRNPNQRVGVYYDEFSVSGYYGDQRFGSANVSSFYQGHKNTTVILTKIEGQNLVVLGDGARTDLKDDEKSGIYRINAKLRLSVRFKFWFIKSWKLKPKIKCDDLKIPLGSSNSTGGFKFQPVQCDFDLS.

The helical transmembrane segment at 57-77 (NILIAVAVILGVAALILWLIF) threads the bilayer. Asn-109, Asn-141, Asn-151, and Asn-223 each carry an N-linked (GlcNAc...) asparagine glycan.

In terms of tissue distribution, expressed at low levels in roots, rosette leaves, cauline leaves, stems, flowers and siliques.

It is found in the cell membrane. In terms of biological role, may play a role in plant immunity. In Arabidopsis thaliana (Mouse-ear cress), this protein is NDR1/HIN1-like protein 2.